A 647-amino-acid polypeptide reads, in one-letter code: DNA ligase (647 aa).

NAD(+) contacts are provided by residues 30 to 34, 79 to 80, and E105; these read DEEYD and SM. Residue K107 is the N6-AMP-lysine intermediate of the active site. NAD(+)-binding residues include R128, E162, and K301. 4 residues coordinate Zn(2+): C395, C398, C411, and C416. The BRCT domain maps to 570 to 647; it reads KSDGVIFGKT…ESAFNELVKE (78 aa).

It belongs to the NAD-dependent DNA ligase family. LigA subfamily. The cofactor is Mg(2+). Mn(2+) is required as a cofactor.

It catalyses the reaction NAD(+) + (deoxyribonucleotide)n-3'-hydroxyl + 5'-phospho-(deoxyribonucleotide)m = (deoxyribonucleotide)n+m + AMP + beta-nicotinamide D-nucleotide.. DNA ligase that catalyzes the formation of phosphodiester linkages between 5'-phosphoryl and 3'-hydroxyl groups in double-stranded DNA using NAD as a coenzyme and as the energy source for the reaction. It is essential for DNA replication and repair of damaged DNA. The chain is DNA ligase from Campylobacter jejuni subsp. jejuni serotype O:6 (strain 81116 / NCTC 11828).